Reading from the N-terminus, the 166-residue chain is MQNCIKLVPLALKCPQRAISTSAVLDGKRNFRKFNVHSKRGTRVVKEAQKTMANPPVPIDKRGVRDTGILVDGKFVEIPEKIPDIIVPDLTDCKLKPYVSYKAPEVVQSEFTSLDLFNAVYSKKIVEDFKAGSLQADGSPKEPSAEEKLTSSEAFLRARRTGSDIF.

The transit peptide at 1 to 26 (MQNCIKLVPLALKCPQRAISTSAVLD) directs the protein to the mitochondrion.

This sequence belongs to the mitochondrion-specific ribosomal protein mL41 family. Component of the mitochondrial ribosome large subunit (39S) which comprises a 16S rRNA and about 50 distinct proteins.

It is found in the mitochondrion. This chain is Large ribosomal subunit protein mL41 (mRpL41), found in Drosophila pseudoobscura pseudoobscura (Fruit fly).